We begin with the raw amino-acid sequence, 414 residues long: Argininosuccinate synthase (414 aa).

ATP is bound by residues 9–17 (AYSGGLDTS) and A35. Positions 86 and 91 each coordinate L-citrulline. Residue 114–122 (SHGATGKGN) participates in ATP binding. L-aspartate-binding residues include T118, N122, and D123. N122 is an L-citrulline binding site. L-citrulline is bound by residues R126, S179, S188, E269, and Y281.

It belongs to the argininosuccinate synthase family. In terms of assembly, homotetramer.

It is found in the cytoplasm. The protein resides in the cytosol. The catalysed reaction is L-citrulline + L-aspartate + ATP = 2-(N(omega)-L-arginino)succinate + AMP + diphosphate + H(+). It functions in the pathway amino-acid biosynthesis; L-arginine biosynthesis; L-arginine from L-ornithine and carbamoyl phosphate: step 2/3. It participates in nitrogen metabolism; urea cycle; (N(omega)-L-arginino)succinate from L-aspartate and L-citrulline: step 1/1. Its function is as follows. One of the enzymes of the urea cycle, the metabolic pathway transforming neurotoxic amonia produced by protein catabolism into inocuous urea in the liver of ureotelic animals. Catalyzes the formation of arginosuccinate from aspartate, citrulline and ATP and together with ASL it is responsible for the biosynthesis of arginine in most body tissues. The polypeptide is Argininosuccinate synthase (Danio rerio (Zebrafish)).